We begin with the raw amino-acid sequence, 170 residues long: Lipoprotein signal peptidase (170 aa).

Helical transmembrane passes span 11–31, 41–61, 69–89, and 95–115; these read LGWL…KLHF, IVVI…AAFS, WQRW…VVWL, and NETW…GNLY. Catalysis depends on residues aspartate 125 and aspartate 144. A helical membrane pass occupies residues 136–156; that stretch reads YFPAFNFADSAITVGAVMLAL.

Belongs to the peptidase A8 family.

The protein localises to the cell inner membrane. It carries out the reaction Release of signal peptides from bacterial membrane prolipoproteins. Hydrolyzes -Xaa-Yaa-Zaa-|-(S,diacylglyceryl)Cys-, in which Xaa is hydrophobic (preferably Leu), and Yaa (Ala or Ser) and Zaa (Gly or Ala) have small, neutral side chains.. It functions in the pathway protein modification; lipoprotein biosynthesis (signal peptide cleavage). Functionally, this protein specifically catalyzes the removal of signal peptides from prolipoproteins. The polypeptide is Lipoprotein signal peptidase (Pseudomonas fluorescens (strain ATCC BAA-477 / NRRL B-23932 / Pf-5)).